Consider the following 705-residue polypeptide: Ribosomal RNA large subunit methyltransferase K/L (705 aa).

In terms of domain architecture, THUMP spans 42 to 154 (LAQKVCLSTR…RYGVSMYIDY (113 aa)).

The protein belongs to the methyltransferase superfamily. RlmKL family.

Its subcellular location is the cytoplasm. The enzyme catalyses guanosine(2445) in 23S rRNA + S-adenosyl-L-methionine = N(2)-methylguanosine(2445) in 23S rRNA + S-adenosyl-L-homocysteine + H(+). It catalyses the reaction guanosine(2069) in 23S rRNA + S-adenosyl-L-methionine = N(2)-methylguanosine(2069) in 23S rRNA + S-adenosyl-L-homocysteine + H(+). Specifically methylates the guanine in position 2445 (m2G2445) and the guanine in position 2069 (m7G2069) of 23S rRNA. This Pseudoalteromonas translucida (strain TAC 125) protein is Ribosomal RNA large subunit methyltransferase K/L.